Consider the following 130-residue polypeptide: MENSALSNCVRRTNFSNQQRTMQEGLEESSWTMYFETEDGLGHYDDSSMMSDAASPMGCVEEDTASSPSNRTEGYSGMEDNTIEEKTMNNGKIEEKILNKNGIKIEEYCAELKKRGLCLVPLSMLSNYIG.

The disordered stretch occupies residues 45 to 81; that stretch reads DDSSMMSDAASPMGCVEEDTASSPSNRTEGYSGMEDN.

In terms of biological role, involved in the regulation of plant growth. This is Vascular-related unknown protein 3 from Arabidopsis thaliana (Mouse-ear cress).